The chain runs to 95 residues: Small ribosomal subunit protein uS19 (95 aa).

Residues 76 to 95 form a disordered region; it reads PTRRFGGHADKKAATKGQVR.

It belongs to the universal ribosomal protein uS19 family.

Its function is as follows. Protein S19 forms a complex with S13 that binds strongly to the 16S ribosomal RNA. This chain is Small ribosomal subunit protein uS19, found in Pseudothermotoga lettingae (strain ATCC BAA-301 / DSM 14385 / NBRC 107922 / TMO) (Thermotoga lettingae).